A 482-amino-acid polypeptide reads, in one-letter code: Keratin, type I cytoskeletal 39 (482 aa).

The segment at 1-24 (MDTKGSTVTISSSTPPQNCSGNTN) is disordered. The segment at 1-91 (MDTKGSTVTI…RCTEGINTHE (91 aa)) is head. The IF rod domain occupies 91–402 (EKETMQILNE…SLLESLDGRL (312 aa)). The tract at residues 92-126 (KETMQILNERLANYLEKVRMLEGENADLEDKIQEA) is coil 1A. Positions 127 to 137 (CSKALPILCPD) are linker 1. The coil 1B stretch occupies residues 138 to 238 (YLSYYTTIEE…HEEEVNSLQC (101 aa)). A linker 12 region spans residues 239–254 (QLGDRINIEVTAAPSV). The tract at residues 255-398 (DLNQILQEMR…ATYRSLLESL (144 aa)) is coil 2. The tail stretch occupies residues 399–482 (DGRLPCNPCA…PCYITRATKV (84 aa)).

It belongs to the intermediate filament family. Heterotetramer of two type I and two type II keratins.

May play a role in late hair differentiation. This is Keratin, type I cytoskeletal 39 (Krt39) from Mus musculus (Mouse).